An 80-amino-acid polypeptide reads, in one-letter code: Defensin-like protein 13 (80 aa).

Residues 1 to 29 (MAKSATIVTLFFAALVFFAALEAPMVVEA) form the signal peptide. Pyrrolidone carboxylic acid is present on Gln-30. Intrachain disulfides connect Cys-33–Cys-80, Cys-44–Cys-65, Cys-50–Cys-74, and Cys-54–Cys-76.

This sequence belongs to the DEFL family. Forms oligomers in its native state. Expressed predominantly in siliques and dry seeds.

It localises to the secreted. In terms of biological role, confers broad-spectrum resistance to pathogens. Possesses antifungal activity sensitive to inorganic cations in vitro. The chain is Defensin-like protein 13 (PDF1.1) from Arabidopsis thaliana (Mouse-ear cress).